A 301-amino-acid polypeptide reads, in one-letter code: Ribosomal RNA small subunit methyltransferase H (301 aa).

S-adenosyl-L-methionine contacts are provided by residues 35-37 (GGH), aspartate 55, phenylalanine 84, aspartate 105, and glutamine 112.

It belongs to the methyltransferase superfamily. RsmH family.

It is found in the cytoplasm. The enzyme catalyses cytidine(1402) in 16S rRNA + S-adenosyl-L-methionine = N(4)-methylcytidine(1402) in 16S rRNA + S-adenosyl-L-homocysteine + H(+). Specifically methylates the N4 position of cytidine in position 1402 (C1402) of 16S rRNA. The sequence is that of Ribosomal RNA small subunit methyltransferase H from Chloroflexus aggregans (strain MD-66 / DSM 9485).